A 949-amino-acid polypeptide reads, in one-letter code: MERSTVLIQPGLWTRDTSWTLLYFLCYILPQTSPQVLRIGGIFETVENEPVNVEELAFKFAVTSINRNRTLMPNTTLTYDIQRINLFDSFEASRRACDQLALGVAALFGPSHSSSVSAVQSICNALEVPHIQTRWKHPSVDSRDLFYINLYPDYAAISRAVLDLVLYYNWKTVTVVYEDSTGLIRLQELIKAPSRYNIKIKIRQLPPANKDAKPLLKEMKKSKEFYVIFDCSHETAAEILKQILFMGMMTEYYHYFFTTLDLFALDLELYRYSGVNMTGFRKLNIDNPHVSSIIEKWSMERLQAPPRPETGLLDGMMTTEAALMYDAVYMVAIASHRASQLTVSSLQCHRHKPCALGPRFMNLIKEARWDGLTGRITFNKTDGLRKDFDLDIISLKEEGTEKASGEVSKHLYKVWKKIGIWNSNSGLNMTDGNRDRSNNITDSLANRTLIVTTILEEPYVMYRKSDKPLYGNDRFEAYCLDLLKELSNILGFLYDVKLVPDGKYGAQNDKGEWNGMVKELIDHRADLAVAPLTITYVREKVIDFSKPFMTLGISILYRKPNGTNPGVFSFLNPLSPDIWMYVLLACLGVSCVLFVIARFTPYEWYNPHPCNPDSDVVENNFTLLNSFWFGVGALMQQGSELMPKALSTRIVGGIWWFFTLIIISSYTANLAAFLTVERMESPIDSADDLAKQTKIEYGAVRDGSTMTFFKKSKISTYEKMWAFMSSRQQSALVKNSDEGIQRVLTTDYALLMESTSIEYVTQRNCNLTQIGGLIDSKGYGVGTPIGSPYRDKITIAILQLQEEGKLHMMKEKWWRGNGCPEEDSKEASALGVENIGGIFIVLAAGLVLSVFVAIGEFLYKSRKNNDVEQKGKSSRLRFYFRNKVRFHGSKKESLGVEKCLSFNAIMEELGISLKNQKKLKKKSRTKGKSSFTSILTCHQRRTQRKETVA.

The N-terminal stretch at 1 to 30 (MERSTVLIQPGLWTRDTSWTLLYFLCYILP) is a signal peptide. At 31-576 (QTSPQVLRIG…VFSFLNPLSP (546 aa)) the chain is on the extracellular side. N68, N74, N276, N379, N428, N439, and N446 each carry an N-linked (GlcNAc...) asparagine glycan. Residues P531, T533, and R538 each coordinate L-glutamate. N561 carries an N-linked (GlcNAc...) asparagine glycan. A helical transmembrane segment spans residues 577 to 597 (DIWMYVLLACLGVSCVLFVIA). Residues 598 to 653 (RFTPYEWYNPHPCNPDSDVVENNFTLLNSFWFGVGALMQQGSELMPKALSTRIVGG) lie on the Cytoplasmic side of the membrane. Residues 654 to 674 (IWWFFTLIIISSYTANLAAFL) traverse the membrane as a helical segment. The Extracellular segment spans residues 675–834 (TVERMESPID…KEASALGVEN (160 aa)). Residues S704 and T705 each coordinate L-glutamate. S725 bears the Phosphoserine; by PKC mark. E753 contacts L-glutamate. Position 761 is a phosphothreonine; by PKC (T761). An intrachain disulfide couples C765 to C819. N766 carries N-linked (GlcNAc...) asparagine glycosylation. The helical transmembrane segment at 835-855 (IGGIFIVLAAGLVLSVFVAIG) threads the bilayer. Residues 856–949 (EFLYKSRKNN…RRTQRKETVA (94 aa)) lie on the Cytoplasmic side of the membrane.

This sequence belongs to the glutamate-gated ion channel (TC 1.A.10.1) family. GRIK1 subfamily. As to quaternary structure, homotetramer or heterotetramer of pore-forming glutamate receptor subunits. Tetramers may be formed by the dimerization of dimers. Can form functional heteromeric receptors with GRIK4 and GRIK5. Interacts with KLHL17. In terms of tissue distribution, expressed in the olfactory bulb (at protein level). Expressed in subsets of neurons throughout the developing and adult central and peripheral nervous systems. In the CNS principally in the medial amygdaloid nuclei, medial habenulae, pyriform and cingulate cortices, and Purkinje cell layer. Also highly expressed in embryonic and adult dorsal root ganglia. Expressed at high levels in the trigeminal ganglion neurons.

The protein localises to the cell membrane. The protein resides in the postsynaptic cell membrane. It carries out the reaction Ca(2+)(in) = Ca(2+)(out). Its function is as follows. Ionotropic glutamate receptor that functions as a cation-permeable ligand-gated ion channel, gated by L-glutamate and the glutamatergic agonist kainic acid. L-glutamate acts as an excitatory neurotransmitter at many synapses in the central nervous system. Binding of the excitatory neurotransmitter L-glutamate induces a conformation change, leading to the opening of the cation channel, and thereby converts the chemical signal to an electrical impulse. The receptor then desensitizes rapidly and enters a transient inactive state, characterized by the presence of bound agonist. In Rattus norvegicus (Rat), this protein is Glutamate receptor ionotropic, kainate 1 (Grik1).